The primary structure comprises 941 residues: Bifunctional uridylyltransferase/uridylyl-removing enzyme (941 aa).

Residues methionine 1–proline 372 form a uridylyltransferase region. The uridylyl-removing stretch occupies residues glycine 373–threonine 728. The 123-residue stretch at valine 489–leucine 611 folds into the HD domain. 2 ACT domains span residues glutamate 729–alanine 810 and valine 840–glutamine 919. Residues leucine 916 to valine 941 form a disordered region.

It belongs to the GlnD family. It depends on Mg(2+) as a cofactor.

It catalyses the reaction [protein-PII]-L-tyrosine + UTP = [protein-PII]-uridylyl-L-tyrosine + diphosphate. The catalysed reaction is [protein-PII]-uridylyl-L-tyrosine + H2O = [protein-PII]-L-tyrosine + UMP + H(+). Its activity is regulated as follows. Uridylyltransferase (UTase) activity is inhibited by glutamine, while glutamine activates uridylyl-removing (UR) activity. Modifies, by uridylylation and deuridylylation, the PII regulatory proteins (GlnB and homologs), in response to the nitrogen status of the cell that GlnD senses through the glutamine level. Under low glutamine levels, catalyzes the conversion of the PII proteins and UTP to PII-UMP and PPi, while under higher glutamine levels, GlnD hydrolyzes PII-UMP to PII and UMP (deuridylylation). Thus, controls uridylylation state and activity of the PII proteins, and plays an important role in the regulation of nitrogen assimilation and metabolism. The sequence is that of Bifunctional uridylyltransferase/uridylyl-removing enzyme from Allorhizobium ampelinum (strain ATCC BAA-846 / DSM 112012 / S4) (Agrobacterium vitis (strain S4)).